The sequence spans 213 residues: Orotate phosphoribosyltransferase (213 aa).

K26 lines the 5-phospho-alpha-D-ribose 1-diphosphate pocket. Position 34 to 35 (34 to 35) interacts with orotate; the sequence is FF. Residues 72-73, R99, K100, K103, H105, and 124-132 each bind 5-phospho-alpha-D-ribose 1-diphosphate; these read YK and DDVITAGTA. Orotate contacts are provided by T128 and R156.

Belongs to the purine/pyrimidine phosphoribosyltransferase family. PyrE subfamily. In terms of assembly, homodimer. Requires Mg(2+) as cofactor.

It catalyses the reaction orotidine 5'-phosphate + diphosphate = orotate + 5-phospho-alpha-D-ribose 1-diphosphate. It functions in the pathway pyrimidine metabolism; UMP biosynthesis via de novo pathway; UMP from orotate: step 1/2. Catalyzes the transfer of a ribosyl phosphate group from 5-phosphoribose 1-diphosphate to orotate, leading to the formation of orotidine monophosphate (OMP). The protein is Orotate phosphoribosyltransferase of Haemophilus influenzae (strain 86-028NP).